A 152-amino-acid chain; its full sequence is 1,4-dihydroxy-2-naphthoyl-CoA hydrolase (152 aa).

Aspartate 20 is a catalytic residue.

It belongs to the 4-hydroxybenzoyl-CoA thioesterase family. DHNA-CoA hydrolase subfamily.

The catalysed reaction is 1,4-dihydroxy-2-naphthoyl-CoA + H2O = 1,4-dihydroxy-2-naphthoate + CoA + H(+). It functions in the pathway cofactor biosynthesis; phylloquinone biosynthesis. Its pathway is quinol/quinone metabolism; 1,4-dihydroxy-2-naphthoate biosynthesis; 1,4-dihydroxy-2-naphthoate from chorismate: step 7/7. In terms of biological role, catalyzes the hydrolysis of 1,4-dihydroxy-2-naphthoyl-CoA (DHNA-CoA) to 1,4-dihydroxy-2-naphthoate (DHNA), a reaction involved in phylloquinone (vitamin K1) biosynthesis. The sequence is that of 1,4-dihydroxy-2-naphthoyl-CoA hydrolase from Parasynechococcus marenigrum (strain WH8102).